A 490-amino-acid polypeptide reads, in one-letter code: Xylulose kinase (490 aa).

Substrate contacts are provided by H99, R170, D280, and N281. ATP-binding positions include W355, 441–442 (GA), and N445.

Belongs to the FGGY kinase family. Monomer.

It carries out the reaction D-xylulose + ATP = D-xylulose 5-phosphate + ADP + H(+). Functionally, phosphorylates D-xylulose to produce D-xylulose 5-phosphate, a molecule that may play an important role in the regulation of glucose metabolism and lipogenesis. The chain is Xylulose kinase (XYLB) from Bos taurus (Bovine).